The chain runs to 312 residues: Ribosomal protein L11 methyltransferase (312 aa).

S-adenosyl-L-methionine is bound by residues Thr-162, Gly-183, Asp-205, and Asn-248.

The protein belongs to the methyltransferase superfamily. PrmA family.

The protein localises to the cytoplasm. It carries out the reaction L-lysyl-[protein] + 3 S-adenosyl-L-methionine = N(6),N(6),N(6)-trimethyl-L-lysyl-[protein] + 3 S-adenosyl-L-homocysteine + 3 H(+). Its function is as follows. Methylates ribosomal protein L11. The chain is Ribosomal protein L11 methyltransferase from Bacillus anthracis (strain A0248).